The primary structure comprises 332 residues: Fructose-1,6-bisphosphatase class 1 (332 aa).

Residues E92, D113, L115, and D116 each contribute to the Mg(2+) site. Substrate is bound by residues 116–119 (DGSS), N209, Y242, and K272. E278 contacts Mg(2+).

This sequence belongs to the FBPase class 1 family. In terms of assembly, homotetramer. It depends on Mg(2+) as a cofactor.

Its subcellular location is the cytoplasm. The catalysed reaction is beta-D-fructose 1,6-bisphosphate + H2O = beta-D-fructose 6-phosphate + phosphate. Its pathway is carbohydrate biosynthesis; Calvin cycle. This is Fructose-1,6-bisphosphatase class 1 from Prosthecochloris aestuarii (strain DSM 271 / SK 413).